The sequence spans 161 residues: Urease accessory protein UreE (161 aa).

The protein belongs to the UreE family.

It is found in the cytoplasm. Functionally, involved in urease metallocenter assembly. Binds nickel. Probably functions as a nickel donor during metallocenter assembly. This is Urease accessory protein UreE from Arthrobacter sp. (strain FB24).